The primary structure comprises 466 residues: ATP synthase subunit beta (466 aa).

148–155 (GGAGVGKT) contacts ATP.

Belongs to the ATPase alpha/beta chains family. F-type ATPases have 2 components, CF(1) - the catalytic core - and CF(0) - the membrane proton channel. CF(1) has five subunits: alpha(3), beta(3), gamma(1), delta(1), epsilon(1). CF(0) has three main subunits: a(1), b(2) and c(9-12). The alpha and beta chains form an alternating ring which encloses part of the gamma chain. CF(1) is attached to CF(0) by a central stalk formed by the gamma and epsilon chains, while a peripheral stalk is formed by the delta and b chains.

The protein localises to the cell inner membrane. It carries out the reaction ATP + H2O + 4 H(+)(in) = ADP + phosphate + 5 H(+)(out). Functionally, produces ATP from ADP in the presence of a proton gradient across the membrane. The catalytic sites are hosted primarily by the beta subunits. The sequence is that of ATP synthase subunit beta from Herminiimonas arsenicoxydans.